We begin with the raw amino-acid sequence, 107 residues long: Ribonuclease P protein component 4 (107 aa).

C66, C69, C92, and C95 together coordinate Zn(2+).

It belongs to the eukaryotic/archaeal RNase P protein component 4 family. In terms of assembly, consists of a catalytic RNA component and at least 4-5 protein subunits. Zn(2+) serves as cofactor.

The protein resides in the cytoplasm. It catalyses the reaction Endonucleolytic cleavage of RNA, removing 5'-extranucleotides from tRNA precursor.. In terms of biological role, part of ribonuclease P, a protein complex that generates mature tRNA molecules by cleaving their 5'-ends. The protein is Ribonuclease P protein component 4 of Methanosarcina acetivorans (strain ATCC 35395 / DSM 2834 / JCM 12185 / C2A).